A 167-amino-acid polypeptide reads, in one-letter code: UPF0587 protein F46B6.12 (167 aa).

Residues Cys34, Cys37, Cys68, and Cys71 each contribute to the Zn(2+) site.

The protein belongs to the UPF0587 family.

This is UPF0587 protein F46B6.12 from Caenorhabditis elegans.